We begin with the raw amino-acid sequence, 178 residues long: Thioredoxin F1, chloroplastic (178 aa).

The disordered stretch occupies residues 1-22 (MPLSLRLSPSPTALSPTTGGFG). The N-terminal 57 residues, 1–57 (MPLSLRLSPSPTALSPTTGGFGPSRKQCRIPYSGVPTTKIGFCSLDSRKRGDSSVVR), are a transit peptide targeting the chloroplast. Polar residues predominate over residues 7 to 18 (LSPSPTALSPTT). Residues 58–174 (CSLETVNVSV…LVAAIETARS (117 aa)) enclose the Thioredoxin domain. Catalysis depends on nucleophile residues cysteine 99 and cysteine 102. Cysteine 99 and cysteine 102 are joined by a disulfide. Cysteine 126 is subject to S-glutathionyl cysteine; transient.

It belongs to the thioredoxin family. Plant F-type subfamily. Post-translationally, glutathionylation at Cys-126 decreases its ability to be reduced by ferredoxin-thioredoxin reductase and reduces its efficiency in activating target chloroplastic enzymes.

It is found in the plastid. It localises to the chloroplast stroma. In terms of biological role, thiol-disulfide oxidoreductase involved in the redox regulation of enzymes of both reductive pentose phosphate pathway (Calvin-Benson cycle) and oxidative pentose phosphate pathway. Under light or reducing conditions, activates in chloroplast the glyceraldehyde-3-phosphate dehydrogenase, the phosphoribulokinase and the fructose-1,6-bisphosphate phosphatase, and inhibits the glucose-6-phosphate dehydrogenase. This Arabidopsis thaliana (Mouse-ear cress) protein is Thioredoxin F1, chloroplastic.